Consider the following 257-residue polypeptide: Type III pantothenate kinase (257 aa).

An ATP-binding site is contributed by 6-13 (DAGNTNIV). Residues Y100 and 107 to 110 (GADR) each bind substrate. The active-site Proton acceptor is the D109. Residue D129 participates in K(+) binding. T132 is an ATP binding site. T184 contacts substrate.

This sequence belongs to the type III pantothenate kinase family. Homodimer. Requires NH4(+) as cofactor. K(+) serves as cofactor.

It is found in the cytoplasm. It catalyses the reaction (R)-pantothenate + ATP = (R)-4'-phosphopantothenate + ADP + H(+). The protein operates within cofactor biosynthesis; coenzyme A biosynthesis; CoA from (R)-pantothenate: step 1/5. Its function is as follows. Catalyzes the phosphorylation of pantothenate (Pan), the first step in CoA biosynthesis. The sequence is that of Type III pantothenate kinase from Clostridium botulinum (strain Alaska E43 / Type E3).